The sequence spans 269 residues: MPGVETIKSSWADEVELDYGGLPPTTETIENGHKYVTEYKYNKDDKKTKVVRTYKISKQVVPKTVAKRRTWTKFGDSKNDKPGPNSQTTMVSEEIIMQFLNSKEDEKANDPLLDPSKNIAKCRICNGEHWSVNCPYKGTAMDTNLMEKKAAAAASAAVDAPKSGKYVPPFLKDSQKGGMGMRGRDDTAAIRISNLSESMTEADLEELVKKIGPQSKMYLARDKNTGLCKGFAYVHFKQRKDAAAAIEILNGHGYDHLILSVEWSKPQNN.

The RRM domain occupies 188–266; it reads AAIRISNLSE…LILSVEWSKP (79 aa).

Belongs to the eIF-3 subunit G family. As to quaternary structure, component of the eukaryotic translation initiation factor 3 (eIF-3) complex. The eIF-3 complex interacts with pix.

Its subcellular location is the cytoplasm. RNA-binding component of the eukaryotic translation initiation factor 3 (eIF-3) complex, which is involved in protein synthesis of a specialized repertoire of mRNAs and, together with other initiation factors, stimulates binding of mRNA and methionyl-tRNAi to the 40S ribosome. The eIF-3 complex specifically targets and initiates translation of a subset of mRNAs involved in cell proliferation. This subunit can bind 18S rRNA. This chain is Eukaryotic translation initiation factor 3 subunit G-1, found in Drosophila virilis (Fruit fly).